The primary structure comprises 117 residues: Venom nerve growth factor (117 aa).

Disulfide bonds link Cys12/Cys77, Cys55/Cys105, and Cys65/Cys107. Asn21 carries N-linked (GlcNAc...) asparagine glycosylation.

It belongs to the NGF-beta family. In terms of assembly, homodimer; non-covalently linked. As to expression, expressed by the venom gland.

The protein localises to the secreted. Nerve growth factor is important for the development and maintenance of the sympathetic and sensory nervous systems. It stimulates division and differentiation of sympathetic and embryonic sensory neurons as well as basal forebrain cholinergic neurons in the brain. Its relevance in the snake venom is not clear. However, it has been shown to inhibit metalloproteinase-dependent proteolysis of platelet glycoprotein Ib alpha, suggesting a metalloproteinase inhibition to prevent metalloprotease autodigestion and/or protection against prey proteases. Binds a lipid between the two protein chains in the homodimer. The lipid-bound form promotes histamine relase from mouse mast cells, contrary to the lipid-free form. The sequence is that of Venom nerve growth factor from Daboia russelii (Russel's viper).